A 309-amino-acid polypeptide reads, in one-letter code: Homoserine kinase (309 aa).

Residue 91 to 101 (PIGSGLGSSAC) participates in ATP binding.

Belongs to the GHMP kinase family. Homoserine kinase subfamily.

It localises to the cytoplasm. It catalyses the reaction L-homoserine + ATP = O-phospho-L-homoserine + ADP + H(+). It functions in the pathway amino-acid biosynthesis; L-threonine biosynthesis; L-threonine from L-aspartate: step 4/5. In terms of biological role, catalyzes the ATP-dependent phosphorylation of L-homoserine to L-homoserine phosphate. The chain is Homoserine kinase from Escherichia fergusonii (strain ATCC 35469 / DSM 13698 / CCUG 18766 / IAM 14443 / JCM 21226 / LMG 7866 / NBRC 102419 / NCTC 12128 / CDC 0568-73).